Consider the following 325-residue polypeptide: Xylosidase/arabinosidase (325 aa).

Aspartate 16 serves as the catalytic Proton acceptor. Residue glutamate 224 is the Proton donor of the active site.

Belongs to the glycosyl hydrolase 43 family.

The enzyme catalyses Hydrolysis of (1-&gt;4)-beta-D-xylans, to remove successive D-xylose residues from the non-reducing termini.. It catalyses the reaction Hydrolysis of terminal non-reducing alpha-L-arabinofuranoside residues in alpha-L-arabinosides.. The chain is Xylosidase/arabinosidase (xsa) from Bacteroides ovatus.